The following is a 404-amino-acid chain: Cysteine desulfurase IscS (404 aa).

Pyridoxal 5'-phosphate-binding positions include 75 to 76, Asn-155, Gln-183, and 203 to 205; these read AT and SGH. Residue Lys-206 is modified to N6-(pyridoxal phosphate)lysine. Thr-243 serves as a coordination point for pyridoxal 5'-phosphate. The Cysteine persulfide intermediate role is filled by Cys-328. Cys-328 is a [2Fe-2S] cluster binding site.

Belongs to the class-V pyridoxal-phosphate-dependent aminotransferase family. NifS/IscS subfamily. As to quaternary structure, homodimer. Forms a heterotetramer with IscU, interacts with other sulfur acceptors. Requires pyridoxal 5'-phosphate as cofactor.

The protein localises to the cytoplasm. It catalyses the reaction (sulfur carrier)-H + L-cysteine = (sulfur carrier)-SH + L-alanine. It participates in cofactor biosynthesis; iron-sulfur cluster biosynthesis. Its function is as follows. Master enzyme that delivers sulfur to a number of partners involved in Fe-S cluster assembly, tRNA modification or cofactor biosynthesis. Catalyzes the removal of elemental sulfur atoms from cysteine to produce alanine. Functions as a sulfur delivery protein for Fe-S cluster synthesis onto IscU, an Fe-S scaffold assembly protein, as well as other S acceptor proteins. This Pectobacterium carotovorum subsp. carotovorum (strain PC1) protein is Cysteine desulfurase IscS.